Consider the following 266-residue polypeptide: Putative [LysW]-aminoadipate/[LysW]-glutamate kinase (266 aa).

Substrate-binding positions include 36–37, arginine 63, and asparagine 168; that span reads GG.

Belongs to the acetylglutamate kinase family. LysZ subfamily.

The protein resides in the cytoplasm. The catalysed reaction is [amino-group carrier protein]-C-terminal-N-(1,4-dicarboxybutan-1-yl)-L-glutamine + ATP = [amino-group carrier protein]-C-terminal-N-(1-carboxy-5-phosphooxy-5-oxopentan-1-yl)-L-glutamine + ADP. The enzyme catalyses [amino-group carrier protein]-C-terminal-gamma-(L-glutamyl)-L-glutamate + ATP = [amino-group carrier protein]-C-terminal-gamma-(5-phospho-L-glutamyl)-L-glutamate + ADP. It functions in the pathway amino-acid biosynthesis; L-lysine biosynthesis via AAA pathway; L-lysine from L-alpha-aminoadipate (Thermus route): step 2/5. Its pathway is amino-acid biosynthesis; L-arginine biosynthesis. In terms of biological role, involved in both the arginine and lysine biosynthetic pathways. Phosphorylates the LysW-bound precursors glutamate (for arginine biosynthesis), respectively alpha-aminoadipate (for lysine biosynthesis). The polypeptide is Putative [LysW]-aminoadipate/[LysW]-glutamate kinase (Cenarchaeum symbiosum (strain A)).